Here is a 200-residue protein sequence, read N- to C-terminus: Interferon lambda-1 (200 aa).

An N-terminal signal peptide occupies residues 1 to 19 (MAAAWTVVLVTLVLGLAVA). A glycan (N-linked (GlcNAc...) asparagine) is linked at Asn-65. An intrachain disulfide couples Cys-68 to Cys-164.

The protein belongs to the lambda interferon family.

Its subcellular location is the secreted. Functionally, cytokine with antiviral, antitumour and immunomodulatory activities. Plays a critical role in the antiviral host defense, predominantly in the epithelial tissues. Acts as a ligand for the heterodimeric class II cytokine receptor composed of IL10RB and IFNLR1, and receptor engagement leads to the activation of the JAK/STAT signaling pathway resulting in the expression of IFN-stimulated genes (ISG), which mediate the antiviral state. Has a restricted receptor distribution and therefore restricted targets: is primarily active in epithelial cells and this cell type-selective action is because of the epithelial cell-specific expression of its receptor IFNLR1. Exerts an immunomodulatory effect by up-regulating MHC class I antigen expression. This is Interferon lambda-1 (IFNL1) from Homo sapiens (Human).